The following is a 79-amino-acid chain: Protein S100-G (79 aa).

An N-acetylserine modification is found at Ser-2. EF-hand domains are found at residues 13–48 (IFEK…KGPS) and 45–79 (KGPS…KISQ). Gln-26 and Glu-31 together coordinate Ca(2+). Phosphoserine is present on Ser-42. Residues Asp-58, Asn-60, Asp-62, Glu-64, and Glu-69 each coordinate Ca(2+).

Belongs to the S-100 family.

This Bos taurus (Bovine) protein is Protein S100-G (S100G).